The chain runs to 1530 residues: B-cell CLL/lymphoma 9-like protein (1530 aa).

Disordered stretches follow at residues 1–101 (MHSE…VLEP), 155–187 (QGHS…TDLH), 246–353 (HISS…PSVL), 398–439 (SGTG…IGGG), 473–503 (QTQN…LSSP), 821–1076 (QNGR…QNPL), 1250–1279 (KGMS…SEVI), and 1310–1331 (SETM…QVSS). Residues 8–18 (SNHGKQVTSGA) are compositionally biased toward polar residues. Over residues 19–34 (QSQLPNVNQAQQQAPA) the composition is skewed to low complexity. Residues 81–93 (ERSVSIDTGDQRE) are compositionally biased toward basic and acidic residues. Positions 156 to 165 (GHSGSSTTGH) are enriched in low complexity. The span at 170–180 (GGPGLGSGHGP) shows a compositional bias: gly residues. 2 stretches are compositionally biased toward polar residues: residues 247–264 (ISSS…QSGT) and 278–287 (GTSTPSSTGH). Low complexity-rich tracts occupy residues 409-426 (GPNG…NSND) and 485-503 (SLMG…LSSP). Composition is skewed to polar residues over residues 875-891 (LSST…TGSR), 920-930 (QLKSPSLSQEP), and 944-953 (SPSQLPQSGP). 3 stretches are compositionally biased toward low complexity: residues 960–971 (AASGAGTPSSTS), 979–994 (GPSL…PGHL), and 1031–1060 (SSST…INPS). The segment covering 1258-1268 (PHQPDSFPPMP) has biased composition (pro residues).

Belongs to the BCL9 family.

Its subcellular location is the nucleus. Functionally, transcriptional regulator that may act as an activator. Plays a role for mesoderm patterning in early embryogenesis. The protein is B-cell CLL/lymphoma 9-like protein (bcl9l) of Danio rerio (Zebrafish).